Consider the following 129-residue polypeptide: Glycine cleavage system H protein (129 aa).

The 82-residue stretch at 23–104 (SVTVGITQHA…CYAAWLFKLK (82 aa)) folds into the Lipoyl-binding domain. Lys-64 carries the post-translational modification N6-lipoyllysine.

The protein belongs to the GcvH family. As to quaternary structure, the glycine cleavage system is composed of four proteins: P, T, L and H. The cofactor is (R)-lipoate.

Functionally, the glycine cleavage system catalyzes the degradation of glycine. The H protein shuttles the methylamine group of glycine from the P protein to the T protein. This Nitrosomonas europaea (strain ATCC 19718 / CIP 103999 / KCTC 2705 / NBRC 14298) protein is Glycine cleavage system H protein.